The chain runs to 735 residues: MDMFNKVTAFLQQALETREPSINLLESFVDHWKAITNYYIETTDESRAVKNTDIPWRLRQMLDILVYEEKQQGEEAGPCMEYLLQHKILETLCTLGKAQYPPGMSQQVMVFFSKVLSHIQKPVLHLINVYRPVQKLINLCGLPHSQTEKEESQFLFAVCTQVNKDPYVLNYILEIKNDSLKRSSSTSDEAAEKDCSGSSSPERASSPSSSSSACSLLSRSGAHPVSSPQEATGMIPVLLHLEKSEKRRVAHRSLESLLLLVSSTQEDTGHLLAERTPLCDLLAQRLTELYLLIPSTIDPADIHSFSVVQWRTRFTQDSTAESQSFPGSENVYRFFCFLDLCNELIKQAPKVLGVKMARALHSQWLKGVIQPHLLQMSEVGILVHTTLLSCSVRHIHSPALLEELVQFMLGSDTDSETRQHLHTHLLRYRLIEHCNHISDEISITTLRLFEELLQKPNRRILSNLVLRNLENRSYKLPGTGASDERLRVESDLLDESEELEEDPFFPDMYDDSGDSNHEPLLSLPNVRERLNPNLHTQVVDTVNSFLCLVPQEAKTSHLVQGAGYDTYVHDAHKVFKECTALVRDWKWPDSAKATVNNPSTDFYEGHFLHILFDRIARILEQPYELNLQVTSVLSRLAVFPHPNLHEYLLDPYISLSPGARSLFSTLVRVIGDLMQRIQNITNVTDRLVVIRRQLMGLDEESMVDHMTLLKGVIVLEEFCKELAAVAFVKLPTEEQ.

The tract at residues 183-229 (SSSTSDEAAEKDCSGSSSPERASSPSSSSSACSLLSRSGAHPVSSPQ) is disordered. Residues 196–221 (SGSSSPERASSPSSSSSACSLLSRSG) are compositionally biased toward low complexity.

Belongs to the FHIP family.

The chain is FHF complex subunit HOOK-interacting protein 2B (fhip2b) from Danio rerio (Zebrafish).